The following is a 315-amino-acid chain: tRNA uridine(34) hydroxylase (315 aa).

In terms of domain architecture, Rhodanese spans 145-235 (MKNDFILVDM…GIIEYVNFIK (91 aa)). The active-site Cysteine persulfide intermediate is the Cys199.

This sequence belongs to the TrhO family.

The catalysed reaction is uridine(34) in tRNA + AH2 + O2 = 5-hydroxyuridine(34) in tRNA + A + H2O. Functionally, catalyzes oxygen-dependent 5-hydroxyuridine (ho5U) modification at position 34 in tRNAs. This is tRNA uridine(34) hydroxylase from Wigglesworthia glossinidia brevipalpis.